The primary structure comprises 702 residues: Phosphatase and actin regulator 4 (702 aa).

Disordered regions lie at residues methionine 1–phenylalanine 37, arginine 72–glycine 194, and asparagine 222–alanine 363. An RPEL 1 repeat occupies glutamate 63–proline 88. Residues arginine 72–leucine 84 are compositionally biased toward basic and acidic residues. A compositionally biased stretch (polar residues) spans glycine 106 to valine 120. A phosphoserine mark is found at serine 116, serine 118, serine 131, and serine 147. The span at serine 147–alanine 156 shows a compositional bias: polar residues. The span at valine 163–arginine 173 shows a compositional bias: pro residues. Residues threonine 233–threonine 250 are compositionally biased toward low complexity. Phosphoserine occurs at positions 270 and 291. Positions proline 301–threonine 318 are enriched in polar residues. 2 positions are modified to phosphoserine: serine 342 and serine 344. Positions serine 342–proline 362 are enriched in pro residues. Threonine 358 bears the Phosphothreonine mark. At serine 427 the chain carries Phosphoserine. At threonine 432 the chain carries Phosphothreonine. Residues serine 443, serine 453, and serine 464 each carry the phosphoserine modification. Residues isoleucine 469 to serine 536 form a disordered region. Residues threonine 484–serine 497 show a composition bias toward polar residues. A compositionally biased stretch (acidic residues) spans glutamate 508–serine 518. Serine 514, serine 516, serine 557, and serine 590 each carry phosphoserine. RPEL repeat units follow at residues asparagine 583 to asparagine 608 and arginine 621 to glutamate 646. Residues arginine 592–glutamate 615 form a disordered region. A Phosphoserine modification is found at serine 628.

It belongs to the phosphatase and actin regulator family. In terms of assembly, binds PPP1CA and actin.

The protein resides in the cytoplasm. It is found in the cell projection. Its subcellular location is the lamellipodium. Functionally, regulator of protein phosphatase 1 (PP1) required for neural tube and optic fissure closure, and enteric neural crest cell (ENCCs) migration during development. Acts as an activator of PP1 by interacting with PPP1CA and preventing phosphorylation of PPP1CA at 'Thr-320'. During neural tube closure, localizes to the ventral neural tube and activates PP1, leading to down-regulate cell proliferation within cranial neural tissue and the neural retina. Also acts as a regulator of migration of enteric neural crest cells (ENCCs) by activating PP1, leading to dephosphorylation and subsequent activation of cofilin (COF1 or COF2) and repression of the integrin signaling through the RHO/ROCK pathway. The protein is Phosphatase and actin regulator 4 (PHACTR4) of Homo sapiens (Human).